The primary structure comprises 148 residues: uncharacterized protein (148 aa).

This is an uncharacterized protein from Saccharomyces cerevisiae (strain ATCC 204508 / S288c) (Baker's yeast).